Consider the following 373-residue polypeptide: Geraniol dehydrogenase (373 aa).

Zn(2+) contacts are provided by C47, H67, C96, C99, C102, C110, and C175.

The protein belongs to the zinc-containing alcohol dehydrogenase family. As to quaternary structure, homodimer. Zn(2+) is required as a cofactor.

It carries out the reaction (2E)-geraniol + NAD(+) = (2E)-geranial + NADH + H(+). It catalyses the reaction perillyl alcohol + NAD(+) = perillyl aldehyde + NADH + H(+). The protein operates within terpene metabolism; monoterpene degradation. Its activity is regulated as follows. Is inhibited by EDTA, N-ethylmaleimide, diethylpyrocarbonate, and 1-cyclohexyl-N-(2-morpholinoethyl)carbodiimide in vitro. Involved in the degradation of the monoterpenes beta-myrcene and limonene. During anaerobic degradation of beta-myrcene, catalyzes the NAD(+)-dependent oxidation of geraniol to geranial. Can also catalyze the oxidation of (S)-perillyl alcohol to perillyl aldehyde, and to a lesser extent, the oxidation of nerol, citronellol, cumic alcohol, and benzyl alcohol. Cannot use NADP(+) instead of NAD(+) as cosubstrate. This is Geraniol dehydrogenase from Castellaniella defragrans (strain DSM 12143 / CCUG 39792 / 65Phen) (Alcaligenes defragrans).